A 196-amino-acid polypeptide reads, in one-letter code: Ribosome maturation factor RimP (196 aa).

The tract at residues 163-196 (GLAPSKPTGPAPKRPKPNTNSSSNEPAAKKPRAE) is disordered.

This sequence belongs to the RimP family.

The protein resides in the cytoplasm. In terms of biological role, required for maturation of 30S ribosomal subunits. The protein is Ribosome maturation factor RimP of Stenotrophomonas maltophilia (strain K279a).